Here is a 455-residue protein sequence, read N- to C-terminus: Keratin, type I cuticular Ha5 (455 aa).

The head stretch occupies residues 1–97; the sequence is MASKCLKASF…FGEGILTGNE (97 aa). The region spanning 97 to 408 is the IF rod domain; it reads EKETMQSLND…GLLESEDSKL (312 aa). The interval 98 to 132 is coil 1A; sequence KETMQSLNDRLASYLEKVRQLEQENASLESRIREW. The interval 133 to 143 is linker 1; that stretch reads CEQQVPYMCPD. The segment at 144 to 244 is coil 1B; that stretch reads YQSYFRTMEE…HEEEVNSLRC (101 aa). Residues 245 to 260 are linker 12; that stretch reads QLGDRLNVEVDAAPPV. Residues 261-404 are coil 2; the sequence is DLNRVLDEMR…NTYRGLLESE (144 aa). Residues 405–455 form a tail region; that stretch reads DSKLPCNPCAPDYSSSKSCLPCLPAVSCSTGAARTTCSPRPVCVPCPGGRF.

Belongs to the intermediate filament family.

This is Keratin, type I cuticular Ha5 from Mus musculus (Mouse).